The following is a 505-amino-acid chain: Maturase K (505 aa).

It belongs to the intron maturase 2 family. MatK subfamily.

The protein resides in the plastid. It is found in the chloroplast. Its function is as follows. Usually encoded in the trnK tRNA gene intron. Probably assists in splicing its own and other chloroplast group II introns. This is Maturase K from Ulmus parvifolia (Chinese elm).